We begin with the raw amino-acid sequence, 475 residues long: Kynureninase (475 aa).

Residues Leu142, Thr143, 170–173 (FPSD), Asp255, His258, and Tyr280 contribute to the pyridoxal 5'-phosphate site. Lys281 carries the N6-(pyridoxal phosphate)lysine modification. Pyridoxal 5'-phosphate is bound by residues Trp320 and Asn348.

It belongs to the kynureninase family. Homodimer. The cofactor is pyridoxal 5'-phosphate.

The protein localises to the cytoplasm. It carries out the reaction L-kynurenine + H2O = anthranilate + L-alanine + H(+). The catalysed reaction is 3-hydroxy-L-kynurenine + H2O = 3-hydroxyanthranilate + L-alanine + H(+). It participates in amino-acid degradation; L-kynurenine degradation; L-alanine and anthranilate from L-kynurenine: step 1/1. It functions in the pathway cofactor biosynthesis; NAD(+) biosynthesis; quinolinate from L-kynurenine: step 2/3. Catalyzes the cleavage of L-kynurenine (L-Kyn) and L-3-hydroxykynurenine (L-3OHKyn) into anthranilic acid (AA) and 3-hydroxyanthranilic acid (3-OHAA), respectively. This is Kynureninase (bna5) from Botryotinia fuckeliana (strain B05.10) (Noble rot fungus).